A 151-amino-acid polypeptide reads, in one-letter code: Methylglyoxal synthase (151 aa).

The 146-residue stretch at 6–151 (RTMPAHKHVA…DYDAYLAERT (146 aa)) folds into the MGS-like domain. Substrate is bound by residues His19, Lys23, 45 to 48 (TGTT), and 65 to 66 (SG). Asp71 (proton donor/acceptor) is an active-site residue. A substrate-binding site is contributed by His98.

It belongs to the methylglyoxal synthase family.

The enzyme catalyses dihydroxyacetone phosphate = methylglyoxal + phosphate. Catalyzes the formation of methylglyoxal from dihydroxyacetone phosphate. The protein is Methylglyoxal synthase of Vibrio campbellii (strain ATCC BAA-1116).